A 454-amino-acid chain; its full sequence is uncharacterized protein (454 aa).

The tract at residues M1–P25 is disordered. Positions R14 to P23 are enriched in basic residues.

It is found in the cytoplasm. It localises to the nucleus. This is an uncharacterized protein from Saccharomyces cerevisiae (strain ATCC 204508 / S288c) (Baker's yeast).